Here is a 143-residue protein sequence, read N- to C-terminus: Putative 2'-deoxynucleoside 5'-phosphate N-hydrolase 1 (143 aa).

Residues His37, Glu82, and 106 to 108 (SAM) contribute to the substrate site.

Belongs to the 2'-deoxynucleoside 5'-phosphate N-hydrolase 1 family. In terms of assembly, monomer and homodimer.

It carries out the reaction a pyrimidine 2'-deoxyribonucleoside 5'-phosphate + H2O = a pyrimidine nucleobase + 2-deoxy-D-ribose 5-phosphate. The enzyme catalyses a purine 2'-deoxyribonucleoside 5'-phosphate + H2O = a purine nucleobase + 2-deoxy-D-ribose 5-phosphate. In terms of biological role, catalyzes the cleavage of the N-glycosidic bond of deoxyribonucleoside 5'-monophosphates to yield deoxyribose 5-phosphate and a purine or pyrimidine base. In Thermofilum pendens (strain DSM 2475 / Hrk 5), this protein is Putative 2'-deoxynucleoside 5'-phosphate N-hydrolase 1.